The primary structure comprises 655 residues: MPVGGLLPLFSSPGGGGLGSGLGGGLGGGRKGSGPAAFRLTEKFVLLLVFSAFITLCFGAIFFLPDSSKLLSGVLFHSNPALQPPAEHKPGLGARAEDAAEGRVRHREEGAPGDPGAGLEDNLARIRENHERALREAKETLQKLPEEIQRDILLEKEKVAQDQLRDKDLFRGLPKVDFLPPVGVENREPADATIREKRAKIKEMMTHAWNNYKRYAWGLNELKPISKEGHSSSLFGNIKGATIVDALDTLFIMGMKTEFQEAKSWIKKYLDFNVNAEVSVFEVNIRFVGGLLSAYYLSGEEIFRKKAVELGVKLLPAFHTPSGIPWALLNMKSGIGRNWPWASGGSSILAEFGTLHLEFMHLSHLSGDPVFAEKVMKIRTVLNKLDKPEGLYPNYLNPSSGQWGQHHVSVGGLGDSFYEYLLKAWLMSDKTDLEAKKMYFDAVQAIETHLIRKSSGGLTYIAEWKGGLLEHKMGHLTCFAGGMFALGADGAPEARAQHYLELGAEIARTCHESYNRTYVKLGPEAFRFDGGVEAIATRQNEKYYILRPEVIETYMYMWRLTHDPKYRTWAWEAVEALESHCRVNGGYSGLRDVYIARESYDDVQQSFFLAETLKYLYLIFSDDDLLPLEHWIFNTEAHPFPILREQKKEIDGKEK.

The Cytoplasmic segment spans residues 1-43 (MPVGGLLPLFSSPGGGGLGSGLGGGLGGGRKGSGPAAFRLTEK). Residues 44–64 (FVLLLVFSAFITLCFGAIFFL) form a helical; Signal-anchor for type II membrane protein membrane-spanning segment. At 65–655 (PDSSKLLSGV…QKKEIDGKEK (591 aa)) the chain is on the lumenal side. Cys478 and Cys510 are joined by a disulfide. Asn515 carries N-linked (GlcNAc...) asparagine glycosylation. Catalysis depends on Glu524, which acts as the Proton donor. Thr635 is a binding site for Ca(2+).

This sequence belongs to the glycosyl hydrolase 47 family. Requires Ca(2+) as cofactor. Post-translationally, N-linked glycan at Asn-515 consists of Man(6)-GlcNAc(2).

The protein resides in the golgi apparatus membrane. The catalysed reaction is N(4)-(alpha-D-Man-(1-&gt;2)-alpha-D-Man-(1-&gt;2)-alpha-D-Man-(1-&gt;3)-[alpha-D-Man-(1-&gt;2)-alpha-D-Man-(1-&gt;3)-[alpha-D-Man-(1-&gt;2)-alpha-D-Man-(1-&gt;6)]-alpha-D-Man-(1-&gt;6)]-beta-D-Man-(1-&gt;4)-beta-D-GlcNAc-(1-&gt;4)-beta-D-GlcNAc)-L-asparaginyl-[protein] (N-glucan mannose isomer 9A1,2,3B1,2,3) + 4 H2O = N(4)-(alpha-D-Man-(1-&gt;3)-[alpha-D-Man-(1-&gt;3)-[alpha-D-Man-(1-&gt;6)]-alpha-D-Man-(1-&gt;6)]-beta-D-Man-(1-&gt;4)-beta-D-GlcNAc-(1-&gt;4)-beta-D-GlcNAc)-L-asparaginyl-[protein] (N-glucan mannose isomer 5A1,2) + 4 beta-D-mannose. The enzyme catalyses N(4)-(alpha-D-Man-(1-&gt;2)-alpha-D-Man-(1-&gt;2)-alpha-D-Man-(1-&gt;3)-[alpha-D-Man-(1-&gt;3)-[alpha-D-Man-(1-&gt;2)-alpha-D-Man-(1-&gt;6)]-alpha-D-Man-(1-&gt;6)]-beta-D-Man-(1-&gt;4)-beta-D-GlcNAc-(1-&gt;4)-beta-D-GlcNAc)-L-asparaginyl-[protein] (N-glucan mannose isomer 8A1,2,3B1,3) + 3 H2O = N(4)-(alpha-D-Man-(1-&gt;3)-[alpha-D-Man-(1-&gt;3)-[alpha-D-Man-(1-&gt;6)]-alpha-D-Man-(1-&gt;6)]-beta-D-Man-(1-&gt;4)-beta-D-GlcNAc-(1-&gt;4)-beta-D-GlcNAc)-L-asparaginyl-[protein] (N-glucan mannose isomer 5A1,2) + 3 beta-D-mannose. Its pathway is protein modification; protein glycosylation. Inhibited by both 1-deoxymannojirimycin and kifunensine. Its function is as follows. Involved in the maturation of Asn-linked oligosaccharides. Progressively trim alpha-1,2-linked mannose residues from Man(9)GlcNAc(2) to produce Man(5)GlcNAc(2). The sequence is that of Mannosyl-oligosaccharide 1,2-alpha-mannosidase IA (Man1a1) from Mus musculus (Mouse).